The primary structure comprises 137 residues: Hemoglobin subunit alpha-2 (137 aa).

Positions aspartate 1–arginine 137 constitute a Globin domain. Histidine 54 contributes to the O2 binding site. Residue histidine 83 participates in heme b binding.

This sequence belongs to the globin family. The N-terminus of the mature protein is acetylated. In terms of tissue distribution, red blood cells.

The sequence is that of Hemoglobin subunit alpha-2 from Telmatobius peruvianus (Andean frog).